Consider the following 73-residue polypeptide: Long neurotoxin 2 (73 aa).

Disulfide bonds link cysteine 3–cysteine 21, cysteine 14–cysteine 42, cysteine 27–cysteine 31, cysteine 46–cysteine 57, and cysteine 58–cysteine 63.

It belongs to the three-finger toxin family. Long-chain subfamily. Type II alpha-neurotoxin sub-subfamily. Expressed by the venom gland.

The protein resides in the secreted. In terms of biological role, binds with high affinity to muscular (alpha-1/CHRNA1) and neuronal (alpha-7/CHRNA7) nicotinic acetylcholine receptor (nAChR) and inhibits acetylcholine from binding to the receptor, thereby impairing neuromuscular and neuronal transmission. The sequence is that of Long neurotoxin 2 from Ophiophagus hannah (King cobra).